A 507-amino-acid polypeptide reads, in one-letter code: MASHDYLKKILTARVYDVAFETELEPARNLSARLRNPVYLKREDNQPVFSFKLRGAYNKMAHIPADALARGVITASAGNHAQGVAFSAARMGVKAVIVVPVTTPQVKVDAVRAHGGPGVEVIQAGESYSDAYAHALKVQEERGLTFVHPFDDPYVIAGQGTIAMEILRQHQGPIHAIFVPIGGGGLAAGVAAYVKAVRPEIKVIGVQAEDSCAMAQSLQAGKRVELAEVGLFADGTAVKLVGEETFRLCKEYLDGVVTVDTDALCAAIKDVFQDTRSVLEPSGALAVAGAKLYAEREGIENQTLVAVTSGANMNFDRMRFVAERAEVGEAREAVFAVTIPEERGSFKRFCSLVGDRNVTEFNYRIADAQSAHIFVGVQIRRRGESADIAANFESHGFKTADLTHDELSKEHIRYMVGGRSPLALDERLFRFEFPERPGALMKFLSSMAPDWNISLFHYRNQGADYSSILVGLQVPQADHAEFERFLAALGYPYVEESANPAYRLFLS.

An N6-(pyridoxal phosphate)lysine modification is found at Lys-52. Pyridoxal 5'-phosphate-binding positions include Asn-79, 182-186, and Ser-309; that span reads GGGGL. ACT-like domains follow at residues 333–404 and 427–498; these read AVFA…DLTH and RLFR…EESA.

Belongs to the serine/threonine dehydratase family. Homotetramer. Requires pyridoxal 5'-phosphate as cofactor.

It catalyses the reaction L-threonine = 2-oxobutanoate + NH4(+). Its pathway is amino-acid biosynthesis; L-isoleucine biosynthesis; 2-oxobutanoate from L-threonine: step 1/1. Functionally, catalyzes the anaerobic formation of alpha-ketobutyrate and ammonia from threonine in a two-step reaction. The first step involved a dehydration of threonine and a production of enamine intermediates (aminocrotonate), which tautomerizes to its imine form (iminobutyrate). Both intermediates are unstable and short-lived. The second step is the nonenzymatic hydrolysis of the enamine/imine intermediates to form 2-ketobutyrate and free ammonia. In the low water environment of the cell, the second step is accelerated by RidA. The protein is L-threonine dehydratase biosynthetic IlvA (ilvA) of Burkholderia multivorans (strain ATCC 17616 / 249).